The chain runs to 370 residues: Quinolinate synthase (370 aa).

2 residues coordinate iminosuccinate: histidine 62 and serine 83. Cysteine 128 contacts [4Fe-4S] cluster. Iminosuccinate contacts are provided by residues 154 to 156 (YAN) and serine 171. Residue cysteine 215 coordinates [4Fe-4S] cluster. Iminosuccinate is bound by residues 241 to 243 (HPE) and threonine 258. Cysteine 312 contributes to the [4Fe-4S] cluster binding site.

This sequence belongs to the quinolinate synthase family. Type 1 subfamily. [4Fe-4S] cluster is required as a cofactor.

It localises to the cytoplasm. The catalysed reaction is iminosuccinate + dihydroxyacetone phosphate = quinolinate + phosphate + 2 H2O + H(+). Its pathway is cofactor biosynthesis; NAD(+) biosynthesis; quinolinate from iminoaspartate: step 1/1. Catalyzes the condensation of iminoaspartate with dihydroxyacetone phosphate to form quinolinate. The polypeptide is Quinolinate synthase (Neisseria meningitidis serogroup C (strain 053442)).